The following is a 237-amino-acid chain: Ribose-5-phosphate isomerase A (237 aa).

Residues 32-35 (TGRT), 85-88 (DGAD), and 99-102 (KGGG) contribute to the substrate site. Residue Glu-108 is the Proton acceptor of the active site. Arg-126 is a substrate binding site.

Belongs to the ribose 5-phosphate isomerase family. In terms of assembly, homodimer.

The catalysed reaction is aldehydo-D-ribose 5-phosphate = D-ribulose 5-phosphate. It functions in the pathway carbohydrate degradation; pentose phosphate pathway; D-ribose 5-phosphate from D-ribulose 5-phosphate (non-oxidative stage): step 1/1. Its function is as follows. Catalyzes the reversible conversion of ribose-5-phosphate to ribulose 5-phosphate. The protein is Ribose-5-phosphate isomerase A of Aeropyrum pernix (strain ATCC 700893 / DSM 11879 / JCM 9820 / NBRC 100138 / K1).